The chain runs to 194 residues: Protein GrpE (194 aa).

The protein belongs to the GrpE family. In terms of assembly, homodimer.

It is found in the cytoplasm. Functionally, participates actively in the response to hyperosmotic and heat shock by preventing the aggregation of stress-denatured proteins, in association with DnaK and GrpE. It is the nucleotide exchange factor for DnaK and may function as a thermosensor. Unfolded proteins bind initially to DnaJ; upon interaction with the DnaJ-bound protein, DnaK hydrolyzes its bound ATP, resulting in the formation of a stable complex. GrpE releases ADP from DnaK; ATP binding to DnaK triggers the release of the substrate protein, thus completing the reaction cycle. Several rounds of ATP-dependent interactions between DnaJ, DnaK and GrpE are required for fully efficient folding. This Aliivibrio fischeri (strain ATCC 700601 / ES114) (Vibrio fischeri) protein is Protein GrpE.